Reading from the N-terminus, the 89-residue chain is Small ribosomal subunit protein uS15 (89 aa).

This sequence belongs to the universal ribosomal protein uS15 family. Part of the 30S ribosomal subunit. Forms a bridge to the 50S subunit in the 70S ribosome, contacting the 23S rRNA.

Its function is as follows. One of the primary rRNA binding proteins, it binds directly to 16S rRNA where it helps nucleate assembly of the platform of the 30S subunit by binding and bridging several RNA helices of the 16S rRNA. Functionally, forms an intersubunit bridge (bridge B4) with the 23S rRNA of the 50S subunit in the ribosome. The polypeptide is Small ribosomal subunit protein uS15 (Streptococcus thermophilus (strain CNRZ 1066)).